A 341-amino-acid chain; its full sequence is MFSSLLPKPKYSSHEPTSRIKLKKVRAHEKSNQLVKLPENKSDIKVTHNPSNSESTISQLHLNPDGTLNYNLTIASSNSNSRKVQSSYEDTIPLKVKFPNLKHHFPRYTVETCPDDSLKECVEDTKAAINKMINEKMGVDEKTNNKKDDVTYIKYTSNNLVNDPEGSDDERGRERIIQIRNYQEDPMLPPKFKLRKNRHKNPSPPPPLLKSSNNEQTSKLTKEDQAKWQIPSAISNWKNNQGFTISLDKRMVAANGGSELATNDVNLEKFGELSQALENADKQAREEIKIRSEMLKQLAIKEQHEKENKLKELADIARSKKLNNKRPPNGDYDDVKKKTKY.

3 disordered regions span residues 1-31 (MFSS…HEKS), 181-226 (NYQE…EDQA), and 302-341 (EQHE…KTKY). Over residues 192-201 (FKLRKNRHKN) the composition is skewed to basic residues. The segment covering 302 to 318 (EQHEKENKLKELADIAR) has biased composition (basic and acidic residues).

This sequence belongs to the SNW family. As to quaternary structure, associated with the spliceosome.

The protein resides in the nucleus. Functionally, involved in pre-mRNA splicing. This Debaryomyces hansenii (strain ATCC 36239 / CBS 767 / BCRC 21394 / JCM 1990 / NBRC 0083 / IGC 2968) (Yeast) protein is Pre-mRNA-processing protein 45 (PRP45).